The following is a 474-amino-acid chain: Solute carrier family 49 member A3 (474 aa).

The disordered stretch occupies residues 1–20; the sequence is MEGESAETEPLIQSSSAADR. 12 consecutive transmembrane segments (helical) span residues 38–58, 69–89, 105–126, 134–154, 175–195, 201–221, 258–278, 290–310, 326–346, 349–369, 388–408, and 428–448; these read WFIL…WLTF, LCVS…AAVV, CSLI…CGVL, VFAV…LVIF, LASM…PLIV, LFLL…LATL, WILL…STLL, GFAG…AFLL, ICMC…QLPA, VLLV…YPVG, LIFT…QALA, and VPVL…VVFF.

It belongs to the major facilitator superfamily.

It localises to the membrane. This is Solute carrier family 49 member A3 (slc49a3) from Danio rerio (Zebrafish).